Reading from the N-terminus, the 301-residue chain is MKIGILSQFPELYSTRRLVAACESRGHEAVVINTLNCYMNINSIKPSIHYQGQELTGFDAIIPRIHASVTFYGCAVVRQFEMMGVFAANDSISIARSRDKLRALQLLSRKGIGMPITGFANKPNDIPDLINMVGGAPLVIKLLEGTQGIGVVLAETKTAAESVIEAFLGLKANIMVQEYIKESNGSDIRCFVVGDKVVASMKRQGPEGDFRSNLHLGGCGEKVKITPAERKMAVAAVKAMGLVVAGVDILRSNRGPLILEVNSAPGIEGIEQTTGISVTEPIVEYIEKMVSARKSNRAVIA.

Residues 104–287 (LQLLSRKGIG…VTEPIVEYIE (184 aa)) enclose the ATP-grasp domain. ATP contacts are provided by residues K141, 178 to 179 (EY), D187, and 211 to 213 (RSN). 3 residues coordinate Mg(2+): D248, E260, and N262. D248, E260, and N262 together coordinate Mn(2+).

It belongs to the RimK family. Mg(2+) is required as a cofactor. The cofactor is Mn(2+).

This Shewanella sp. (strain ANA-3) protein is Probable alpha-L-glutamate ligase 1.